The chain runs to 601 residues: Elongation factor 4 (601 aa).

The region spanning 6-188 is the tr-type G domain; that stretch reads SHIRNFSIIA…QIVHRVPAPE (183 aa). Residues 18-23 and 135-138 contribute to the GTP site; these read DHGKST and NKID.

The protein belongs to the TRAFAC class translation factor GTPase superfamily. Classic translation factor GTPase family. LepA subfamily.

The protein resides in the cell inner membrane. It carries out the reaction GTP + H2O = GDP + phosphate + H(+). In terms of biological role, required for accurate and efficient protein synthesis under certain stress conditions. May act as a fidelity factor of the translation reaction, by catalyzing a one-codon backward translocation of tRNAs on improperly translocated ribosomes. Back-translocation proceeds from a post-translocation (POST) complex to a pre-translocation (PRE) complex, thus giving elongation factor G a second chance to translocate the tRNAs correctly. Binds to ribosomes in a GTP-dependent manner. The chain is Elongation factor 4 from Anaeromyxobacter dehalogenans (strain 2CP-1 / ATCC BAA-258).